A 1021-amino-acid chain; its full sequence is Immunoglobulin superfamily member 2 (1021 aa).

Residues 1-20 (MAGISYVASFFLLLTKLSIG) form the signal peptide. Residues 21-954 (QREVTVQKGP…LPSRICSSAP (934 aa)) lie on the Extracellular side of the membrane. Ig-like C2-type domains follow at residues 22-139 (REVT…AKTN), 144-265 (PDTL…WMFI), 279-389 (PAVK…RTGS), 408-525 (PAAR…RDLS), 541-651 (LQVS…NSLY), 656-794 (PRAS…WHKL), and 808-925 (PTGS…KWIN). 2 cysteine pairs are disulfide-bonded: C43–C121 and C168–C249. N44 is a glycosylation site (N-linked (GlcNAc...) asparagine). Residues 253–255 (EWI) carry the EWI motif motif. 5 cysteine pairs are disulfide-bonded: C304-C377, C434-C511, C562-C640, C697-C778, and C834-C909. A glycan (N-linked (GlcNAc...) asparagine) is linked at N322. A helical transmembrane segment spans residues 955-975 (LLYFLFICPFVLLLLLLISLL). Topologically, residues 976–1021 (CLYWKARKLSTLRSNTRKEKALWVDLKEAGGVTTNRREDEEEDEGN) are cytoplasmic.

In terms of processing, N-glycosylated. Expressed in lung, thymus and small intestine. Detected in cutaneous dendritic cells, activated T-cells, monocytes and granulocytes as well as with epithelial cells with dendritic morphology. Expressed in some leukemic cells, the CD4(+) CD56(+) blastic tumor cells, as well as in Langerhans cells from LCH (Langerhans cell histiocytosis) patients.

Its subcellular location is the membrane. Functionally, plays a role as inhibitor of T-cells proliferation induced by CD3. Inhibits expression of IL2RA on activated T-cells and secretion of IL2. Inhibits tyrosine kinases that are required for IL2 production and cellular proliferation. Inhibits phospholipase C-gamma-1/PLCG1 phosphorylation and subsequent CD3-induced changes in intracellular free calcium. Prevents nuclear translocation of nuclear factor of activated T-cell to the nucleus. Plays a role in the inhibition of T-cell proliferation via IL10 secretion by cutaneous dendritic cells. May be a marker of CD4(+) CD56(+) leukemic tumor cells. The sequence is that of Immunoglobulin superfamily member 2 (CD101) from Homo sapiens (Human).